A 360-amino-acid polypeptide reads, in one-letter code: Photosystem II protein D1 3 (360 aa).

The next 3 membrane-spanning stretches (helical) occupy residues 29–46 (YVGW…TATI), 118–133 (HFLL…EWEL), and 142–156 (WIAV…AATA). A chlorophyll a-binding site is contributed by histidine 118. Tyrosine 126 is a binding site for pheophytin a. [CaMn4O5] cluster-binding residues include aspartate 170 and glutamate 189. A helical transmembrane segment spans residues 197–218 (FHMLGVAGVFGGALFSAMHGSL). Histidine 198 is a chlorophyll a binding site. Residues histidine 215 and 264 to 265 (SF) contribute to the a quinone site. Histidine 215 contacts Fe cation. Residue histidine 272 coordinates Fe cation. Residues 274-288 (FLAAWPVIGIWFASL) form a helical membrane-spanning segment. Histidine 332, glutamate 333, aspartate 342, and alanine 344 together coordinate [CaMn4O5] cluster. Positions 345–360 (AGDQAPVALQAPAING) are excised as a propeptide.

The protein belongs to the reaction center PufL/M/PsbA/D family. As to quaternary structure, PSII is composed of 1 copy each of membrane proteins PsbA, PsbB, PsbC, PsbD, PsbE, PsbF, PsbH, PsbI, PsbJ, PsbK, PsbL, PsbM, PsbT, PsbX, PsbY, PsbZ, Psb30/Ycf12, peripheral proteins PsbO, CyanoQ (PsbQ), PsbU, PsbV and a large number of cofactors. It forms dimeric complexes. The cofactor is The D1/D2 heterodimer binds P680, chlorophylls that are the primary electron donor of PSII, and subsequent electron acceptors. It shares a non-heme iron and each subunit binds pheophytin, quinone, additional chlorophylls, carotenoids and lipids. D1 provides most of the ligands for the Mn4-Ca-O5 cluster of the oxygen-evolving complex (OEC). There is also a Cl(-1) ion associated with D1 and D2, which is required for oxygen evolution. The PSII complex binds additional chlorophylls, carotenoids and specific lipids.. In terms of processing, tyr-161 forms a radical intermediate that is referred to as redox-active TyrZ, YZ or Y-Z. Post-translationally, C-terminally processed by CtpA; processing is essential to allow assembly of the oxygen-evolving complex and thus photosynthetic growth.

Its subcellular location is the cellular thylakoid membrane. It carries out the reaction 2 a plastoquinone + 4 hnu + 2 H2O = 2 a plastoquinol + O2. In terms of biological role, photosystem II (PSII) is a light-driven water:plastoquinone oxidoreductase that uses light energy to abstract electrons from H(2)O, generating O(2) and a proton gradient subsequently used for ATP formation. It consists of a core antenna complex that captures photons, and an electron transfer chain that converts photonic excitation into a charge separation. The D1/D2 (PsbA/PsbD) reaction center heterodimer binds P680, the primary electron donor of PSII as well as several subsequent electron acceptors. The protein is Photosystem II protein D1 3 of Picosynechococcus sp. (strain ATCC 27264 / PCC 7002 / PR-6) (Agmenellum quadruplicatum).